Consider the following 192-residue polypeptide: Group XIIA secretory phospholipase A2 (192 aa).

The first 25 residues, 1-25 (MVTPRPAPARSPALLLLLLLATARG), serve as a signal peptide directing secretion. Residues Gly-91, Pro-93, and Phe-95 each contribute to the Ca(2+) site. His-113 is an active-site residue. Asp-114 is a binding site for Ca(2+). Residue Asp-128 is part of the active site.

Belongs to the phospholipase A2 family. Ca(2+) serves as cofactor.

It localises to the secreted. It is found in the cytoplasm. The catalysed reaction is a 1,2-diacyl-sn-glycero-3-phosphocholine + H2O = a 1-acyl-sn-glycero-3-phosphocholine + a fatty acid + H(+). Functionally, PA2 catalyzes the calcium-dependent hydrolysis of the 2-acyl groups in 3-sn-phosphoglycerides. Does not exhibit detectable activity toward sn-2-arachidonoyl- or linoleoyl-phosphatidylcholine or -phosphatidylethanolamine. The chain is Group XIIA secretory phospholipase A2 (Pla2g12a) from Mus musculus (Mouse).